Here is a 514-residue protein sequence, read N- to C-terminus: MKTLSQLVFNNTYSELPTTFGTAVIPQPLSDPFLVSVNPQVAEMLELDPLEAKTRLFINSFTGNKELAGTAPLAMKYTGHQFGHYNPDLGDGRGLLLGEVLTSTNAKWDIHLKGSGKTPYSRQGDGRAVLRSSIREYLGSAALNGLGIKTTHALALLGSTTLVSREKMERGATLIRVAESHLRFGHFEYLFYTHQHSELKLLADYLIKHHFPDLLTTESEQEDKQTASPNQHHNIYASMLTRIVELTAQLIAGWQSVGFAHGVMNTDNMSVLGLTFDYGPFGFLDDYNPDYICNHSDYSGRYAFNQQPSIALWNLSALGYALTPLIDKEDVDAILNRYHLTLQRDYSARMRNKLGLIEKREEDTVLFSSLFELLQSQMVDYTLFFRTLSSISATDLSVTSLPNSIERFDDLFTCTQPLEKWLKAYAVRLSFENDTSEKNGDTLRLTQMKLHNPKYILRNYLAQQAIDKAEDGDFTMIDELLQVLSSPFDEHLEFNQFADKPPYWGKKLEISCSS.

The ATP site is built by G90, G92, R93, K113, D125, G126, R176, and R183. The active-site Proton acceptor is the D267. N268 and D277 together coordinate Mg(2+). D277 is a binding site for ATP.

Belongs to the SELO family. It depends on Mg(2+) as a cofactor. The cofactor is Mn(2+).

It carries out the reaction L-seryl-[protein] + ATP = 3-O-(5'-adenylyl)-L-seryl-[protein] + diphosphate. The enzyme catalyses L-threonyl-[protein] + ATP = 3-O-(5'-adenylyl)-L-threonyl-[protein] + diphosphate. It catalyses the reaction L-tyrosyl-[protein] + ATP = O-(5'-adenylyl)-L-tyrosyl-[protein] + diphosphate. The catalysed reaction is L-histidyl-[protein] + UTP = N(tele)-(5'-uridylyl)-L-histidyl-[protein] + diphosphate. It carries out the reaction L-seryl-[protein] + UTP = O-(5'-uridylyl)-L-seryl-[protein] + diphosphate. The enzyme catalyses L-tyrosyl-[protein] + UTP = O-(5'-uridylyl)-L-tyrosyl-[protein] + diphosphate. Nucleotidyltransferase involved in the post-translational modification of proteins. It can catalyze the addition of adenosine monophosphate (AMP) or uridine monophosphate (UMP) to a protein, resulting in modifications known as AMPylation and UMPylation. This Photobacterium profundum (strain SS9) protein is Protein nucleotidyltransferase YdiU.